The primary structure comprises 275 residues: Holocytochrome c-type synthase (275 aa).

Disordered stretches follow at residues 1 to 59 and 83 to 102; these read MGLS…KTNS and KENLDPSNLMPPPNQTPAPD. Glycine 2 is lipidated: N-myristoyl glycine. Over residues 9 to 28 the composition is skewed to polar residues; that stretch reads AASTVQTSTPAASDHQTAAP. 2 HRM repeats span residues 31-36 and 41-46; these read GCPMHE and GCPVSA. The segment covering 48 to 59 has biased composition (polar residues); that stretch reads PSDSTCGSKTNS. A compositionally biased stretch (pro residues) spans 91–102; the sequence is LMPPPNQTPAPD.

It belongs to the cytochrome c-type heme lyase family.

Its subcellular location is the mitochondrion inner membrane. It is found in the membrane. The enzyme catalyses holo-[cytochrome c] = apo-[cytochrome c] + heme b. Its function is as follows. Lyase that catalyzes the covalent linking of the heme group to the cytochrome C apoprotein to produce the mature functional cytochrome. The polypeptide is Holocytochrome c-type synthase (Bos taurus (Bovine)).